We begin with the raw amino-acid sequence, 711 residues long: Polyribonucleotide nucleotidyltransferase (711 aa).

Residues Asp486 and Asp492 each contribute to the Mg(2+) site. In terms of domain architecture, KH spans 553-612 (PRIHTIKINPDKIKDVIGKGGSVIRALTEETGTTIEIEDDGTVKIAATDGDKAQHAIRRI). One can recognise an S1 motif domain in the interval 622 to 690 (GRIYNGKVTR…RQGRVRLSIK (69 aa)). A disordered region spans residues 689-711 (IKEATEQTPSAAAPEAPAAEQGE). Low complexity predominate over residues 694 to 711 (EQTPSAAAPEAPAAEQGE).

Belongs to the polyribonucleotide nucleotidyltransferase family. As to quaternary structure, component of the RNA degradosome, which is a multiprotein complex involved in RNA processing and mRNA degradation. It depends on Mg(2+) as a cofactor.

Its subcellular location is the cytoplasm. The catalysed reaction is RNA(n+1) + phosphate = RNA(n) + a ribonucleoside 5'-diphosphate. Its function is as follows. Involved in mRNA degradation. Catalyzes the phosphorolysis of single-stranded polyribonucleotides processively in the 3'- to 5'-direction. The protein is Polyribonucleotide nucleotidyltransferase of Klebsiella pneumoniae subsp. pneumoniae (strain ATCC 700721 / MGH 78578).